Here is a 117-residue protein sequence, read N- to C-terminus: Small ribosomal subunit protein uS17 (117 aa).

It belongs to the universal ribosomal protein uS17 family. Part of the 30S ribosomal subunit.

Its function is as follows. One of the primary rRNA binding proteins, it binds specifically to the 5'-end of 16S ribosomal RNA. The sequence is that of Small ribosomal subunit protein uS17 from Methanocaldococcus jannaschii (strain ATCC 43067 / DSM 2661 / JAL-1 / JCM 10045 / NBRC 100440) (Methanococcus jannaschii).